Here is a 349-residue protein sequence, read N- to C-terminus: 1-acylglycerol-3-phosphate O-acyltransferase ABHD5 (349 aa).

Ala-2 is subject to N-acetylalanine. The AB hydrolase-1 domain maps to 77 to 185; the sequence is PLVLLHGFGG…VEPWGFPERP (109 aa). The HXXXXD motif signature appears at 327–332; that stretch reads HYVYAD.

The protein belongs to the peptidase S33 family. ABHD4/ABHD5 subfamily. In terms of assembly, interacts with ADRP, PLIN and PNPLA2. Interacts with PLIN5; promotes interaction with PNPLA2.

It localises to the cytoplasm. Its subcellular location is the lipid droplet. The enzyme catalyses a 1-acyl-sn-glycero-3-phosphate + an acyl-CoA = a 1,2-diacyl-sn-glycero-3-phosphate + CoA. The catalysed reaction is 1-(9Z-octadecenoyl)-sn-glycero-3-phosphate + (9Z)-octadecenoyl-CoA = 1,2-di-(9Z-octadecenoyl)-sn-glycero-3-phosphate + CoA. It carries out the reaction 1-(9Z-octadecenoyl)-sn-glycero-3-phosphate + hexadecanoyl-CoA = 1-(9Z)-octadecenoyl-2-hexadecanoyl-sn-glycero-3-phosphate + CoA. It catalyses the reaction 1-(9Z-octadecenoyl)-sn-glycero-3-phosphate + octadecanoyl-CoA = 1-(9Z-octadecenoyl)-2-octadecanoyl-sn-glycero-3-phosphate + CoA. The enzyme catalyses 1-(9Z-octadecenoyl)-sn-glycero-3-phosphate + (5Z,8Z,11Z,14Z)-eicosatetraenoyl-CoA = 1-(9Z)-octadecenoyl-2-(5Z,8Z,11Z,14Z)-eicosatetraenoyl-sn-glycero-3-phosphate + CoA. The catalysed reaction is eicosanoyl-CoA + 1-(9Z-octadecenoyl)-sn-glycero-3-phosphate = 1-(9Z)-octadecenoyl-2-eicosanoyl-sn-glycero-3-phosphate + CoA. It carries out the reaction 1-hexadecanoyl-sn-glycero-3-phosphate + (9Z)-octadecenoyl-CoA = 1-hexadecanoyl-2-(9Z-octadecenoyl)-sn-glycero-3-phosphate + CoA. It catalyses the reaction 1-octadecanoyl-sn-glycero-3-phosphate + (9Z)-octadecenoyl-CoA = 1-octadecanoyl-2-(9Z-octadecenoyl)-sn-glycero-3-phosphate + CoA. The enzyme catalyses 1-(5Z,8Z,11Z,14Z-eicosatetraenoyl)-sn-glycero-3-phosphate + (9Z)-octadecenoyl-CoA = 1-(5Z,8Z,11Z,14Z)-eicosatetraenoyl-2-(9Z)-octadecenoyl-sn-glycero-3-phosphate + CoA. With respect to regulation, acyltransferase activity is inhibited by detergents such as Triton X-100 and 3-[(3-cholamidopropyl)dimethylammonio]-1-propanesulfonate (CHAPS). Acyltransferase activity is inhibited by the presence of magnesium and calcium. Coenzyme A-dependent lysophosphatidic acid acyltransferase that catalyzes the transfer of an acyl group on a lysophosphatidic acid. Functions preferentially with 1-oleoyl-lysophosphatidic acid followed by 1-palmitoyl-lysophosphatidic acid, 1-stearoyl-lysophosphatidic acid and 1-arachidonoyl-lysophosphatidic acid as lipid acceptor. Functions preferentially with arachidonoyl-CoA followed by oleoyl-CoA as acyl group donors. Functions in phosphatidic acid biosynthesis. May regulate the cellular storage of triacylglycerol through activation of the phospholipase PNPLA2. Involved in keratinocyte differentiation. Regulates lipid droplet fusion. In Sus scrofa (Pig), this protein is 1-acylglycerol-3-phosphate O-acyltransferase ABHD5.